Here is a 264-residue protein sequence, read N- to C-terminus: Putative hydro-lyase cgR_2449 (264 aa).

Belongs to the D-glutamate cyclase family.

In Corynebacterium glutamicum (strain R), this protein is Putative hydro-lyase cgR_2449.